We begin with the raw amino-acid sequence, 495 residues long: Ectonucleoside triphosphate diphosphohydrolase 2 (495 aa).

Residues 1–4 (MAGK) lie on the Cytoplasmic side of the membrane. The chain crosses the membrane as a helical span at residues 5-25 (LVSLVPPLLLAAVGLAGLLLL). Over 26-462 (CVPTQDVREP…PGLRKGTHFS (437 aa)) the chain is Extracellular. Residue N64 is glycosylated (N-linked (GlcNAc...) asparagine). C75 and C99 form a disulfide bridge. An N-linked (GlcNAc...) asparagine glycan is attached at N129. Catalysis depends on E165, which acts as the Proton acceptor. Position 204 to 208 (204 to 208 (GASTQ)) interacts with ATP. 2 disulfide bridges follow: C242–C284 and C265–C310. N294 and N319 each carry an N-linked (GlcNAc...) asparagine glycan. 2 disulfides stabilise this stretch: C323–C328 and C377–C399. N-linked (GlcNAc...) asparagine glycans are attached at residues N378 and N443. A helical membrane pass occupies residues 463 to 483 (SWVALLLLFTVLILAALVLLL). Topologically, residues 484-495 (RQVRSAKSPGAL) are cytoplasmic.

It belongs to the GDA1/CD39 NTPase family. Requires Ca(2+) as cofactor. Mg(2+) serves as cofactor.

Its subcellular location is the cell membrane. In the nervous system, could hydrolyze ATP and other nucleotides to regulate purinergic neurotransmission. Hydrolyzes ADP only to a marginal extent. The polypeptide is Ectonucleoside triphosphate diphosphohydrolase 2 (Entpd2) (Mus musculus (Mouse)).